A 129-amino-acid chain; its full sequence is Small ribosomal subunit protein uS11 (129 aa).

This sequence belongs to the universal ribosomal protein uS11 family. In terms of assembly, part of the 30S ribosomal subunit. Interacts with proteins S7 and S18. Binds to IF-3.

Its function is as follows. Located on the platform of the 30S subunit, it bridges several disparate RNA helices of the 16S rRNA. Forms part of the Shine-Dalgarno cleft in the 70S ribosome. In Colwellia psychrerythraea (strain 34H / ATCC BAA-681) (Vibrio psychroerythus), this protein is Small ribosomal subunit protein uS11.